We begin with the raw amino-acid sequence, 131 residues long: ATP synthase epsilon chain (131 aa).

The protein belongs to the ATPase epsilon chain family. In terms of assembly, F-type ATPases have 2 components, CF(1) - the catalytic core - and CF(0) - the membrane proton channel. CF(1) has five subunits: alpha(3), beta(3), gamma(1), delta(1), epsilon(1). CF(0) has three main subunits: a, b and c.

The protein localises to the cell membrane. In terms of biological role, produces ATP from ADP in the presence of a proton gradient across the membrane. The sequence is that of ATP synthase epsilon chain from Bacillus pumilus (strain SAFR-032).